We begin with the raw amino-acid sequence, 134 residues long: ATP synthase epsilon chain (134 aa).

This sequence belongs to the ATPase epsilon chain family. As to quaternary structure, F-type ATPases have 2 components, CF(1) - the catalytic core - and CF(0) - the membrane proton channel. CF(1) has five subunits: alpha(3), beta(3), gamma(1), delta(1), epsilon(1). CF(0) has three main subunits: a, b and c.

The protein localises to the cell membrane. Functionally, produces ATP from ADP in the presence of a proton gradient across the membrane. The chain is ATP synthase epsilon chain from Carboxydothermus hydrogenoformans (strain ATCC BAA-161 / DSM 6008 / Z-2901).